A 379-amino-acid polypeptide reads, in one-letter code: Cysteine-rich receptor-like protein kinase 44 (379 aa).

The Protein kinase domain maps to 56 to 336 (FSPYNHLGEG…VRMLNANSFT (281 aa)). ATP contacts are provided by residues 62–70 (LGEGGFGAV) and K84. Residue Y129 is modified to Phosphotyrosine. The active-site Proton acceptor is the D181. S185 carries the phosphoserine modification. T223 carries the phosphothreonine modification. Y231 is modified (phosphotyrosine).

The protein belongs to the protein kinase superfamily. Ser/Thr protein kinase family. CRK subfamily.

The enzyme catalyses L-seryl-[protein] + ATP = O-phospho-L-seryl-[protein] + ADP + H(+). The catalysed reaction is L-threonyl-[protein] + ATP = O-phospho-L-threonyl-[protein] + ADP + H(+). This Arabidopsis thaliana (Mouse-ear cress) protein is Cysteine-rich receptor-like protein kinase 44.